We begin with the raw amino-acid sequence, 514 residues long: Acetylcholine receptor subunit gamma (514 aa).

An N-terminal signal peptide occupies residues 1 to 22; it reads MRCSDLLLLFLLALCVLPGISC. Residues 23–241 are Extracellular-facing; that stretch reads RNQEEKLLQD…VIFYLIIQRK (219 aa). Cys-150 and Cys-164 are joined by a disulfide. N-linked (GlcNAc...) asparagine glycosylation is present at Asn-163. The next 3 helical transmembrane spans lie at 242–266, 275–293, and 309–330; these read PLFYIINIIVPCVLISSMAVLVYFL, CTVSINVLLAQTVFLFLIA, and YLTFLMVVTVVIVVNAVIVLNV. The Cytoplasmic segment spans residues 331 to 473; that stretch reads SLRTPNTHSM…WILVGRVIDR (143 aa). Tyr-386 bears the Phosphotyrosine; by Tyr-kinases mark. A helical transmembrane segment spans residues 474 to 494; it reads VCFFIMASLFVCGTIGIFLMA.

The protein belongs to the ligand-gated ion channel (TC 1.A.9) family. Acetylcholine receptor (TC 1.A.9.1) subfamily. Gamma/CHRNG sub-subfamily. Pentamer of two alpha chains, and one each of the beta, delta, and gamma chains.

It localises to the postsynaptic cell membrane. The protein resides in the cell membrane. It carries out the reaction K(+)(in) = K(+)(out). It catalyses the reaction Na(+)(in) = Na(+)(out). In terms of biological role, after binding acetylcholine, the AChR responds by an extensive change in conformation that affects all subunits and leads to opening of an ion-conducting channel across the plasma membrane. This Gallus gallus (Chicken) protein is Acetylcholine receptor subunit gamma (CHRNG).